The chain runs to 159 residues: Ribosomal RNA large subunit methyltransferase H (159 aa).

S-adenosyl-L-methionine contacts are provided by residues L76, G108, and F127–F132.

The protein belongs to the RNA methyltransferase RlmH family. In terms of assembly, homodimer.

It is found in the cytoplasm. It carries out the reaction pseudouridine(1915) in 23S rRNA + S-adenosyl-L-methionine = N(3)-methylpseudouridine(1915) in 23S rRNA + S-adenosyl-L-homocysteine + H(+). Specifically methylates the pseudouridine at position 1915 (m3Psi1915) in 23S rRNA. This is Ribosomal RNA large subunit methyltransferase H from Clostridium botulinum (strain Eklund 17B / Type B).